The primary structure comprises 85 residues: uncharacterized protein (85 aa).

The tract at residues 35–85 (SDKDAPFSTQALTRSKSKRKRSALPVANGLKKPTRSIKRPSRGERLSATTI) is disordered.

This is an uncharacterized protein from Pasteurella multocida (strain Pm70).